The primary structure comprises 393 residues: Phospholipid-transporting ATPase accessory subunit CRF1 (393 aa).

The Cytoplasmic segment spans residues 1–46; it reads MGLILRWKEKKQLSSKQNAQKSRKPANTSFRQQRLKAWQPILSPQS. Residues 47 to 67 form a helical membrane-spanning segment; the sequence is VLPLLILMACVFAPIGIGLVV. Topologically, residues 68–334 are lumenal; it reads STISVQRLVV…NSIIGAGNEA (267 aa). Positions 70 to 332 are confers specificity for binding DNF3; it reads ISVQRLVVNY…TTNSIIGAGN (263 aa). Asparagine 78, asparagine 123, asparagine 187, asparagine 202, asparagine 213, asparagine 240, and asparagine 291 each carry an N-linked (GlcNAc...) asparagine glycan. Cystine bridges form between cysteine 82–cysteine 126 and cysteine 179–cysteine 193. The helical transmembrane segment at 335–355 threads the bilayer; the sequence is LGIVYLIVAGIATLFAILFLI. Residues 356 to 393 lie on the Cytoplasmic side of the membrane; sequence KVIFKPRPMHDHSYLNFENSDTPFDESSVVSIPLREIL.

Belongs to the CDC50/LEM3 family. As to quaternary structure, component of a flippase complex consisting of DNF3 and YNR048W/CRF1. Interacts with DNF3; the interaction is direct and required for proper expression and endoplasmic reticulum (ER) export of either partner.

The protein resides in the golgi apparatus. The protein localises to the trans-Golgi network membrane. Functionally, accessory component of a P4-ATPase flippase complex which catalyzes the hydrolysis of ATP coupled to the transport of phosphatidylcholine and small amounts of phosphatidylethanolamine from the lumen to the cytosolic leaflet of the trans-Golgi network and ensures the maintenance of asymmetric distribution of phospholipids. May be involved in transport from early endosomes to the trans-Golgi network (TGN). This is Phospholipid-transporting ATPase accessory subunit CRF1 from Saccharomyces cerevisiae (strain ATCC 204508 / S288c) (Baker's yeast).